We begin with the raw amino-acid sequence, 96 residues long: Large ribosomal subunit protein eL14 (96 aa).

It belongs to the eukaryotic ribosomal protein eL14 family.

This is Large ribosomal subunit protein eL14 from Sulfurisphaera tokodaii (strain DSM 16993 / JCM 10545 / NBRC 100140 / 7) (Sulfolobus tokodaii).